The sequence spans 171 residues: Large ribosomal subunit protein bL9 (171 aa).

This sequence belongs to the bacterial ribosomal protein bL9 family.

In terms of biological role, binds to the 23S rRNA. In Rickettsia akari (strain Hartford), this protein is Large ribosomal subunit protein bL9.